Consider the following 185-residue polypeptide: Large ribosomal subunit protein uL5m (185 aa).

The protein belongs to the universal ribosomal protein uL5 family. In terms of assembly, component of the mitochondrial ribosome large subunit.

Its subcellular location is the mitochondrion. This chain is Large ribosomal subunit protein uL5m (RPL5), found in Arabidopsis thaliana (Mouse-ear cress).